Consider the following 1239-residue polypeptide: Potassium channel subfamily T member 1 (1239 aa).

The tract at residues 1–45 (MARAKLPRSPSEGKAGPGDTPAGSAAPEEPHGLSPLLPTRGGGSV) is disordered. Over 1 to 93 (MARAKLPRSP…LFFIKNQRSS (93 aa)) the chain is Cytoplasmic. A helical membrane pass occupies residues 94–126 (LRIRLFNFSLKLLTCLLYIVRVLLDNPDQGIGC). At 127–153 (WGCTKYNYTFNGSSSEFHWAPILWVER) the chain is on the extracellular side. Residues asparagine 133 and asparagine 137 are each glycosylated (N-linked (GlcNAc...) asparagine). A helical membrane pass occupies residues 154–178 (KMALWVIQVIVATISFLETMLLIYL). The Cytoplasmic segment spans residues 179–192 (SYKGNIWEQIFHVS). Residues 193 to 208 (FVLEMINTLPFIITVF) form a helical membrane-spanning segment. Residues 209-215 (WPPLRNL) lie on the Extracellular side of the membrane. A helical transmembrane segment spans residues 216-233 (FIPVFLNCWLAKHALENM). Residues 234-246 (INDFHRAILRTQS) lie on the Cytoplasmic side of the membrane. The helical transmembrane segment at 247 to 274 (AMFNQVLILFCTLLCLVFTGTCGIQHLE) threads the bilayer. Residues 275-281 (RAGGNLN) are Extracellular-facing. An intramembrane region (pore-forming) is located at residues 282-302 (LLTSFYFCIVTFSTVGFGDVT). The K(+) site is built by valine 296 and glycine 297. The Extracellular segment spans residues 303 to 304 (PK). A helical membrane pass occupies residues 305–338 (IWPSQLLVVILICVTLVVLPLQFEELVYLWMERQ). The Cytoplasmic segment spans residues 339–1239 (KSGGNYSRHR…NPETRDETQL (901 aa)). Residues 352 to 488 (EKHVVLCVSS…FHVKFADHVV (137 aa)) enclose the RCK N-terminal 1 domain. Residues leucine 513, histidine 516, serine 538, and asparagine 540 each coordinate Na(+). The segment at 658–689 (QNTDCRPSQGGSGGGGGKLTLPTENGSGSRRP) is disordered. Zn(2+) contacts are provided by cysteine 758 and cysteine 759. Residues arginine 761 and lysine 764 each coordinate K(+). Na(+) is bound by residues arginine 761 and lysine 764. Residues cysteine 766 and histidine 768 each coordinate Zn(2+). Positions 769, 771, 777, and 778 each coordinate K(+). Tyrosine 771 serves as a coordination point for Na(+). Na(+) is bound at residue phenylalanine 779. The RCK N-terminal 2 domain maps to 781-921 (NKLIIVSAET…QFRAKDSYSL (141 aa)). 5 residues coordinate K(+): serine 787, leucine 818, aspartate 820, glycine 842, and aspartate 865. 2 disordered regions span residues 1053 to 1081 (REAK…ADPV) and 1212 to 1239 (TSSS…ETQL). Over residues 1213-1230 (SSSQSRKSSCSNKLSSCN) the composition is skewed to low complexity.

It belongs to the potassium channel family. Calcium-activated (TC 1.A.1.3) subfamily. KCa4.1/KCNT1 sub-subfamily. Homotetramer; which constitutes the Na(+)-activated K(+) channel. Interacts with KCNT2; these heterodimer channels differ from the homomers in their unitary conductance, kinetic behavior, subcellular localization, and response to activation of protein kinase C. Interacts (via C-terminus) with FMR1; this interaction alters gating properties of KCNT1. Interacts with CRBN via its cytoplasmic C-terminus. In terms of assembly, does not interact with KCNT2. In terms of processing, phosphorylated by protein kinase C. Phosphorylation of the C-terminal domain increases channel activity. Detected in brain and brainstem, in vestibular and oculomotor nuclei, the medial nucleus of the trapezoid in the auditory system, in olfactory bulb, red nucleus, and deep cerebellar nuclei. Detected in thalamus, substantia nigra, and amygdala (at protein level). Highly expressed in the brain and kidney.

It is found in the cell membrane. The catalysed reaction is K(+)(in) = K(+)(out). Activated by high intracellular Na(+) level. In addition to activation by Na(+), is cooperatively activated by intracellular Cl(-) levels. Activated upon stimulation of G-protein coupled receptors, such as CHRM1 and GRIA1. Functionally, sodium-activated K(+) channel. Acts as an important mediator of neuronal membrane excitability. Contributes to the delayed outward currents. Regulates neuronal bursting in sensory neurons. Contributes to synaptic development and plasticity. This is Potassium channel subfamily T member 1 (Kcnt1) from Rattus norvegicus (Rat).